A 366-amino-acid polypeptide reads, in one-letter code: Tetraacyldisaccharide 4'-kinase (366 aa).

ATP is bound at residue 65–72 (TVGGTGKT). The tract at residues 343 to 366 (AKSTPASGGATGLNKEHQDGQPAA) is disordered. The segment covering 356-366 (NKEHQDGQPAA) has biased composition (basic and acidic residues).

Belongs to the LpxK family.

The catalysed reaction is a lipid A disaccharide + ATP = a lipid IVA + ADP + H(+). It functions in the pathway glycolipid biosynthesis; lipid IV(A) biosynthesis; lipid IV(A) from (3R)-3-hydroxytetradecanoyl-[acyl-carrier-protein] and UDP-N-acetyl-alpha-D-glucosamine: step 6/6. Transfers the gamma-phosphate of ATP to the 4'-position of a tetraacyldisaccharide 1-phosphate intermediate (termed DS-1-P) to form tetraacyldisaccharide 1,4'-bis-phosphate (lipid IVA). The polypeptide is Tetraacyldisaccharide 4'-kinase (Cupriavidus pinatubonensis (strain JMP 134 / LMG 1197) (Cupriavidus necator (strain JMP 134))).